Consider the following 234-residue polypeptide: Demethylmenaquinone methyltransferase (234 aa).

Residues threonine 58, aspartate 79, and 104 to 105 (NA) each bind S-adenosyl-L-methionine.

The protein belongs to the class I-like SAM-binding methyltransferase superfamily. MenG/UbiE family.

The catalysed reaction is a 2-demethylmenaquinol + S-adenosyl-L-methionine = a menaquinol + S-adenosyl-L-homocysteine + H(+). The protein operates within quinol/quinone metabolism; menaquinone biosynthesis; menaquinol from 1,4-dihydroxy-2-naphthoate: step 2/2. Its function is as follows. Methyltransferase required for the conversion of demethylmenaquinol (DMKH2) to menaquinol (MKH2). This is Demethylmenaquinone methyltransferase from Lysinibacillus sphaericus (strain C3-41).